We begin with the raw amino-acid sequence, 64 residues long: Large ribosomal subunit protein uL30 (64 aa).

It belongs to the universal ribosomal protein uL30 family. Part of the 50S ribosomal subunit.

This Rhodopseudomonas palustris (strain BisB18) protein is Large ribosomal subunit protein uL30.